The sequence spans 414 residues: Alanine--glyoxylate aminotransferase (414 aa).

The N-terminal 23 residues, 1-23 (MFQALAKASAALGPRAAGWVRTM), are a transit peptide targeting the mitochondrion. Lysine 231 is subject to N6-(pyridoxal phosphate)lysine. N6-acetyllysine is present on residues lysine 256 and lysine 334. Arginine 382 is a binding site for substrate.

Belongs to the class-V pyridoxal-phosphate-dependent aminotransferase family. In terms of assembly, homodimer. Pyridoxal 5'-phosphate serves as cofactor.

It is found in the peroxisome. Its subcellular location is the mitochondrion matrix. It carries out the reaction L-serine + pyruvate = 3-hydroxypyruvate + L-alanine. The catalysed reaction is glyoxylate + L-alanine = glycine + pyruvate. Its function is as follows. Catalyzes the transamination of glyoxylate to glycine and contributes to the glyoxylate detoxification. Catalyzes the transamination between L-serine and pyruvate and weakly contributes to gluconeogenesis from the L-serine metabolism. This is Alanine--glyoxylate aminotransferase from Callithrix jacchus (White-tufted-ear marmoset).